Reading from the N-terminus, the 230-residue chain is Type II restriction enzyme SinI (230 aa).

It carries out the reaction Endonucleolytic cleavage of DNA to give specific double-stranded fragments with terminal 5'-phosphates.. Functionally, a P subtype restriction enzyme that recognizes the double-stranded sequence 5'-GGWCC-3' and cleaves after G-1. The polypeptide is Type II restriction enzyme SinI (sinIR) (Salmonella infantis).